Reading from the N-terminus, the 186-residue chain is UPF0301 protein HI_0304 (186 aa).

Belongs to the UPF0301 (AlgH) family.

This Haemophilus influenzae (strain ATCC 51907 / DSM 11121 / KW20 / Rd) protein is UPF0301 protein HI_0304.